A 189-amino-acid chain; its full sequence is Auxin-induced protein IAA4 (189 aa).

The short motif at 8-12 (LRLGL) is the EAR-like (transcriptional repression) element. One can recognise a PB1 domain in the interval 92-179 (GIFVKVSMDG…SCKRLRIMKG (88 aa)).

It belongs to the Aux/IAA family. As to quaternary structure, homodimers and heterodimers. In terms of processing, phosphorylated by phytochrome A in vitro.

The protein resides in the nucleus. In terms of biological role, aux/IAA proteins are short-lived transcriptional factors that function as repressors of early auxin response genes at low auxin concentrations. Repression is thought to result from the interaction with auxin response factors (ARFs), proteins that bind to the auxin-responsive promoter element (AuxRE). Formation of heterodimers with ARF proteins may alter their ability to modulate early auxin response genes expression. The polypeptide is Auxin-induced protein IAA4 (IAA4/5) (Pisum sativum (Garden pea)).